The following is a 485-amino-acid chain: Isocitrate dehydrogenase [NADP], chloroplastic/mitochondrial (485 aa).

A chloroplast and mitochondrion-targeting transit peptide spans 1–65; the sequence is MLNKLTHGVF…VQFHRASAVR (65 aa). Residues 147–149 and Arg154 each bind NADP(+); that span reads TIT. Thr149 is a substrate binding site. Residues 166–172, Arg181, and Arg204 contribute to the substrate site; that span reads SPNGTIR. A Mn(2+)-binding site is contributed by Asp323. Residue Lys331 coordinates NADP(+). Asp346 provides a ligand contact to Mn(2+). Residues 381–386 and Asn399 each bind NADP(+); that span reads GTVTRH.

It belongs to the isocitrate and isopropylmalate dehydrogenases family. Mg(2+) serves as cofactor. Requires Mn(2+) as cofactor.

The protein localises to the plastid. Its subcellular location is the chloroplast. The protein resides in the mitochondrion. It carries out the reaction D-threo-isocitrate + NADP(+) = 2-oxoglutarate + CO2 + NADPH. Functionally, may be involved in response to oxidative stresses. The chain is Isocitrate dehydrogenase [NADP], chloroplastic/mitochondrial from Arabidopsis thaliana (Mouse-ear cress).